We begin with the raw amino-acid sequence, 1034 residues long: Beta-galactosidase (1034 aa).

Glu-481 acts as the Proton donor in catalysis. Residue Glu-547 is the Nucleophile of the active site.

Belongs to the glycosyl hydrolase 2 family.

The catalysed reaction is Hydrolysis of terminal non-reducing beta-D-galactose residues in beta-D-galactosides.. The sequence is that of Beta-galactosidase (bgaM) from Priestia megaterium (strain DSM 319 / IMG 1521) (Bacillus megaterium).